The primary structure comprises 330 residues: MAAVDSFYLLYREIARSCSCYVEALALVGAWYTARKSIPVICDFYSLVRLHFIPRLGSRPDLIKQYGRWAVISGATDGIGKAYAEELASHGLNIILISQEEEKLQAVAKHIADTYRVETLVLVADFSRGREIYAPIREALRDRDIGILVNDVGAFYPYPQYFSQVPEDTIWDIVNVNIAAASLMVHIVLPGMVERKKGAIVTVSSGSCCKPTPQLAAFSASKAYLDHFSRALQYEYASKGIFVQSLIPFYVTSSVTAPGSFLRRCPWLAPSPRVYAQHAVSTLGISKRTTGYWSHSIQFLFAQYMPEWLWVWGANLLNRSLRKEALSSQA.

At Ala-2 the chain carries N-acetylalanine. The required for mitochondria translocation stretch occupies residues 2 to 82 (AAVDSFYLLY…SGATDGIGKA (81 aa)). Residues 74–80 (GATDGIG), Asp-125, and Lys-222 contribute to the NADP(+) site.

This sequence belongs to the short-chain dehydrogenases/reductases (SDR) family. 17-beta-HSD 3 subfamily. Interacts with STYXL1.

The protein resides in the mitochondrion. The chain is Inactive hydroxysteroid dehydrogenase-like protein 1 (Hsdl1) from Rattus norvegicus (Rat).